Consider the following 991-residue polypeptide: Translation initiation factor IF-2 (991 aa).

Disordered regions lie at residues 58–82 (EGKK…GRSR) and 106–405 (QARA…PAPQ). The segment covering 106–164 (QARADAAASDAAPAEPAPAAAEPSASAPVTAPVNAPAADAPQAPATAAPDTAAPAAETP) has biased composition (low complexity). The span at 165–175 (SQPPAVEPQPA) shows a compositional bias: pro residues. Composition is skewed to low complexity over residues 190–206 (AKPA…AAVE), 221–258 (AVQA…ASKP), and 267–276 (APVPVAAPAV). Over residues 279 to 289 (AGREEARRAAE) the composition is skewed to basic and acidic residues. The segment covering 379–388 (RAGGKGGKGG) has biased composition (gly residues). Residues 395-405 (QAERRHEPAPQ) show a composition bias toward basic and acidic residues. One can recognise a tr-type G domain in the interval 492–659 (PRAPVVTVMG…NVLLQAEILE (168 aa)). The tract at residues 501–508 (GHVDHGKT) is G1. A GTP-binding site is contributed by 501 to 508 (GHVDHGKT). Positions 526–530 (GITQH) are G2. Positions 547–550 (DTPG) are G3. GTP contacts are provided by residues 547-551 (DTPGH) and 601-604 (NKID). A G4 region spans residues 601-604 (NKID). Positions 637 to 639 (SAK) are G5.

The protein belongs to the TRAFAC class translation factor GTPase superfamily. Classic translation factor GTPase family. IF-2 subfamily.

The protein localises to the cytoplasm. One of the essential components for the initiation of protein synthesis. Protects formylmethionyl-tRNA from spontaneous hydrolysis and promotes its binding to the 30S ribosomal subunits. Also involved in the hydrolysis of GTP during the formation of the 70S ribosomal complex. The polypeptide is Translation initiation factor IF-2 (Bordetella petrii (strain ATCC BAA-461 / DSM 12804 / CCUG 43448)).